Here is a 25-residue protein sequence, read N- to C-terminus: Caerin 2.1 (25 aa).

As to expression, expressed by the skin dorsal glands.

Its subcellular location is the secreted. In terms of biological role, antibacterial peptide with narrow spectrum of activity. Active against the Gram-negative bacterium P.multocida (MIC=25 ug/ml). Inhibits the formation of NO by neuronal nitric oxide synthase with an IC(50) of 9 ug/ml. This is Caerin 2.1 from Litoria peronii (Emerald spotted tree frog).